We begin with the raw amino-acid sequence, 642 residues long: Threonine--tRNA ligase (642 aa).

A TGS domain is found at Met1–Thr61. The segment at Asp243–Pro534 is catalytic. Cys334, His385, and His511 together coordinate Zn(2+).

It belongs to the class-II aminoacyl-tRNA synthetase family. As to quaternary structure, homodimer. Requires Zn(2+) as cofactor.

It localises to the cytoplasm. The catalysed reaction is tRNA(Thr) + L-threonine + ATP = L-threonyl-tRNA(Thr) + AMP + diphosphate + H(+). Its function is as follows. Catalyzes the attachment of threonine to tRNA(Thr) in a two-step reaction: L-threonine is first activated by ATP to form Thr-AMP and then transferred to the acceptor end of tRNA(Thr). Also edits incorrectly charged L-seryl-tRNA(Thr). This chain is Threonine--tRNA ligase, found in Salmonella paratyphi A (strain ATCC 9150 / SARB42).